The sequence spans 623 residues: (-)-alpha-pinene synthase 1, chloroplastic (623 aa).

The transit peptide at 1 to 52 (MDLISVLPSASKSCVCLHKPLSSSTHKLKPFCKTIRILGMPRRWKFAGPSMS) directs the protein to the chloroplast. Residues Asp-374, Asp-378, and Asp-526 each coordinate Mg(2+). The DDXXD motif motif lies at 374-378 (DDMYD).

Belongs to the terpene synthase family. Tpsd subfamily. The cofactor is Mg(2+). Requires Mn(2+) as cofactor.

It is found in the plastid. The protein resides in the chloroplast. The enzyme catalyses (2E)-geranyl diphosphate = (1S,5S)-alpha-pinene + diphosphate. It carries out the reaction (2E)-geranyl diphosphate = (1S,5S)-beta-pinene + diphosphate. It catalyses the reaction (2E)-geranyl diphosphate = (-)-beta-phellandrene + diphosphate. The protein operates within terpene metabolism; oleoresin biosynthesis. It participates in secondary metabolite biosynthesis; terpenoid biosynthesis. Its function is as follows. Monoterpene synthase (TPS) involved in the biosynthesis of monoterpene natural products included in conifer oleoresin secretions and volatile emissions; these compounds contribute to biotic and abiotic stress defense against herbivores and pathogens. Catalyzes the conversion of (2E)-geranyl diphosphate (GPP) to (-)-alpha-pinene and (-)-beta-pinene, and, to a lower extent, to (-)-beta-phellandrene. In Pinus banksiana (Jack pine), this protein is (-)-alpha-pinene synthase 1, chloroplastic.